Here is a 534-residue protein sequence, read N- to C-terminus: CTP synthase (534 aa).

The amidoligase domain stretch occupies residues 1-267 (MSKYIVVTGG…GSYILNRLNI (267 aa)). Serine 13 contacts CTP. Residue serine 13 participates in UTP binding. 14–19 (SIGKGI) provides a ligand contact to ATP. Tyrosine 54 provides a ligand contact to L-glutamine. Position 71 (aspartate 71) interacts with ATP. Mg(2+) contacts are provided by aspartate 71 and glutamate 141. CTP-binding positions include 148–150 (DIE), 188–193 (KTKPTQ), and lysine 224. Residues 188–193 (KTKPTQ) and lysine 224 contribute to the UTP site. A Glutamine amidotransferase type-1 domain is found at 294-532 (KIAVVGKYIE…IKAAKNKKQN (239 aa)). Residue glycine 353 coordinates L-glutamine. Cysteine 380 functions as the Nucleophile; for glutamine hydrolysis in the catalytic mechanism. L-glutamine-binding positions include 381 to 384 (LGLH), glutamate 403, and arginine 460. Catalysis depends on residues histidine 505 and glutamate 507.

Belongs to the CTP synthase family. As to quaternary structure, homotetramer.

The enzyme catalyses UTP + L-glutamine + ATP + H2O = CTP + L-glutamate + ADP + phosphate + 2 H(+). It carries out the reaction L-glutamine + H2O = L-glutamate + NH4(+). It catalyses the reaction UTP + NH4(+) + ATP = CTP + ADP + phosphate + 2 H(+). It participates in pyrimidine metabolism; CTP biosynthesis via de novo pathway; CTP from UDP: step 2/2. Its activity is regulated as follows. Allosterically activated by GTP, when glutamine is the substrate; GTP has no effect on the reaction when ammonia is the substrate. The allosteric effector GTP functions by stabilizing the protein conformation that binds the tetrahedral intermediate(s) formed during glutamine hydrolysis. Inhibited by the product CTP, via allosteric rather than competitive inhibition. Functionally, catalyzes the ATP-dependent amination of UTP to CTP with either L-glutamine or ammonia as the source of nitrogen. Regulates intracellular CTP levels through interactions with the four ribonucleotide triphosphates. This Methanosphaera stadtmanae (strain ATCC 43021 / DSM 3091 / JCM 11832 / MCB-3) protein is CTP synthase.